The following is a 368-amino-acid chain: RNA polymerase sigma factor SigA (368 aa).

Residues 16–90 (TLTLEDVKKQ…KLNPSDLSAP (75 aa)) form a sigma-70 factor domain-1 region. The tract at residues 69-90 (LVNEKDSSDTDEKLNPSDLSAP) is disordered. A compositionally biased stretch (basic and acidic residues) spans 71–83 (NEKDSSDTDEKLN). The segment at 135 to 205 (LAEANLRLVV…TRAIADQART (71 aa)) is sigma-70 factor domain-2. The Interaction with polymerase core subunit RpoC motif lies at 159–162 (DLIQ). The sigma-70 factor domain-3 stretch occupies residues 214-291 (ETINKLIRVQ…QEAQSPSDHA (78 aa)). The interval 303–356 (VLDTLTDREENVLRLRFGLDDGRTRTLEEVGKVFGVTRERIRQIEAKALRKLRH) is sigma-70 factor domain-4. The H-T-H motif DNA-binding region spans 329 to 348 (LEEVGKVFGVTRERIRQIEA).

This sequence belongs to the sigma-70 factor family. RpoD/SigA subfamily. In terms of assembly, interacts transiently with the RNA polymerase catalytic core formed by RpoA, RpoB, RpoC and RpoZ (2 alpha, 1 beta, 1 beta' and 1 omega subunit) to form the RNA polymerase holoenzyme that can initiate transcription. Interacts (via sigma-70 factor domain 4) with the phage G1 protein gp67; this inhibits rRNA synthesis. Interaction with phage G1 protein gp67 does not inhibit transcription in general, but selectively inhibits transcription from promoters that require interaction of the RNA polymerase alpha subunit with DNA sequences upstream of the -35 promoter element.

The protein localises to the cytoplasm. In terms of biological role, sigma factors are initiation factors that promote the attachment of RNA polymerase to specific initiation sites and are then released. This sigma factor is the primary sigma factor during exponential growth. In Staphylococcus aureus (strain NCTC 8325 / PS 47), this protein is RNA polymerase sigma factor SigA.